Consider the following 327-residue polypeptide: 4-hydroxy-2-oxoglutarate aldolase, mitochondrial (327 aa).

The N-terminal 25 residues, 1–25, are a transit peptide targeting the mitochondrion; the sequence is MLGPQVWSSVRQGLSRSLSRNVGVW. 77–78 is a binding site for substrate; the sequence is SN. K196 functions as the Schiff-base intermediate with substrate in the catalytic mechanism. Residues S198 and G222 each contribute to the substrate site.

Belongs to the DapA family. Homotetramer.

It localises to the mitochondrion. It carries out the reaction (4S)-4-hydroxy-2-oxoglutarate = glyoxylate + pyruvate. It catalyses the reaction (4R)-4-hydroxy-2-oxoglutarate = glyoxylate + pyruvate. Inhibited by divalent cations. Functionally, catalyzes the final step in the metabolic pathway of hydroxyproline. The sequence is that of 4-hydroxy-2-oxoglutarate aldolase, mitochondrial (HOGA1) from Homo sapiens (Human).